The chain runs to 275 residues: AA9 family lytic polysaccharide monooxygenase D (275 aa).

A signal peptide spans 1–17 (MKLSLLAIAAIAPFVSA). Cu(2+) is bound by residues His-18 and His-101. An intrachain disulfide couples Cys-67 to Cys-189. O2 is bound at residue His-176. Tyr-186 provides a ligand contact to Cu(2+). Asn-220 carries N-linked (GlcNAc...) asparagine glycosylation.

It belongs to the polysaccharide monooxygenase AA9 family. Requires Cu(2+) as cofactor.

It is found in the secreted. It catalyses the reaction [(1-&gt;4)-beta-D-glucosyl]n+m + reduced acceptor + O2 = 4-dehydro-beta-D-glucosyl-[(1-&gt;4)-beta-D-glucosyl]n-1 + [(1-&gt;4)-beta-D-glucosyl]m + acceptor + H2O.. In terms of biological role, lytic polysaccharide monooxygenase (LPMO) that depolymerizes crystalline and amorphous polysaccharides via the oxidation of scissile alpha- or beta-(1-4)-glycosidic bonds, yielding C1 or C4 oxidation products. Catalysis by LPMOs requires the reduction of the active-site copper from Cu(II) to Cu(I) by a reducing agent and H(2)O(2) or O(2) as a cosubstrate. This Aspergillus tamarii protein is AA9 family lytic polysaccharide monooxygenase D.